The primary structure comprises 539 residues: Chaperonin GroEL 1 (539 aa).

ATP is bound by residues 29 to 32 (TLGP), 86 to 90 (DGTTT), Gly413, and Asp495.

It belongs to the chaperonin (HSP60) family. Forms a cylinder of 14 subunits composed of two heptameric rings stacked back-to-back. Interacts with the co-chaperonin GroES.

It localises to the cytoplasm. It carries out the reaction ATP + H2O + a folded polypeptide = ADP + phosphate + an unfolded polypeptide.. Together with its co-chaperonin GroES, plays an essential role in assisting protein folding. The GroEL-GroES system forms a nano-cage that allows encapsulation of the non-native substrate proteins and provides a physical environment optimized to promote and accelerate protein folding. This is Chaperonin GroEL 1 from Mycobacterium bovis (strain ATCC BAA-935 / AF2122/97).